The sequence spans 341 residues: S-adenosylmethionine:tRNA ribosyltransferase-isomerase (341 aa).

The protein belongs to the QueA family. As to quaternary structure, monomer.

It localises to the cytoplasm. It carries out the reaction 7-aminomethyl-7-carbaguanosine(34) in tRNA + S-adenosyl-L-methionine = epoxyqueuosine(34) in tRNA + adenine + L-methionine + 2 H(+). The protein operates within tRNA modification; tRNA-queuosine biosynthesis. In terms of biological role, transfers and isomerizes the ribose moiety from AdoMet to the 7-aminomethyl group of 7-deazaguanine (preQ1-tRNA) to give epoxyqueuosine (oQ-tRNA). The protein is S-adenosylmethionine:tRNA ribosyltransferase-isomerase of Clostridium beijerinckii (strain ATCC 51743 / NCIMB 8052) (Clostridium acetobutylicum).